A 96-amino-acid polypeptide reads, in one-letter code: Protein YdfX (96 aa).

This chain is Protein YdfX (ydfX), found in Escherichia coli (strain K12).